The sequence spans 230 residues: UPF0173 metal-dependent hydrolase Dshi_2788 (230 aa).

Belongs to the UPF0173 family.

This is UPF0173 metal-dependent hydrolase Dshi_2788 from Dinoroseobacter shibae (strain DSM 16493 / NCIMB 14021 / DFL 12).